The chain runs to 564 residues: Bifunctional sesquiterpene synthase 1 (564 aa).

Residues Asp317, Asp321, Asp461, and Glu469 each contribute to the Mg(2+) site. Positions 317 to 321 match the DDXXD motif motif; the sequence is DDTFD.

The protein belongs to the terpene synthase family. It depends on Mg(2+) as a cofactor.

The catalysed reaction is (2E,6E)-farnesyl diphosphate = alpha-copaene + diphosphate. It carries out the reaction (2E,6E)-farnesyl diphosphate = delta-cadinene + diphosphate. It functions in the pathway secondary metabolite biosynthesis; terpenoid biosynthesis. Functionally, sesquiterpene synthase converting farnesyl diphosphate to alpha copaene and delta-cadinene as the major products. The protein is Bifunctional sesquiterpene synthase 1 of Phyla dulcis (Aztec sweet herb).